A 127-amino-acid chain; its full sequence is Holo-[acyl-carrier-protein] synthase (127 aa).

The Mg(2+) site is built by Asp8 and Glu57.

The protein belongs to the P-Pant transferase superfamily. AcpS family. Mg(2+) is required as a cofactor.

The protein resides in the cytoplasm. It carries out the reaction apo-[ACP] + CoA = holo-[ACP] + adenosine 3',5'-bisphosphate + H(+). In terms of biological role, transfers the 4'-phosphopantetheine moiety from coenzyme A to a Ser of acyl-carrier-protein. The polypeptide is Holo-[acyl-carrier-protein] synthase (Ruthia magnifica subsp. Calyptogena magnifica).